We begin with the raw amino-acid sequence, 91 residues long: Probable Fe(2+)-trafficking protein (91 aa).

It belongs to the Fe(2+)-trafficking protein family.

In terms of biological role, could be a mediator in iron transactions between iron acquisition and iron-requiring processes, such as synthesis and/or repair of Fe-S clusters in biosynthetic enzymes. The chain is Probable Fe(2+)-trafficking protein from Tolumonas auensis (strain DSM 9187 / NBRC 110442 / TA 4).